A 200-amino-acid polypeptide reads, in one-letter code: Probable molybdenum cofactor guanylyltransferase (200 aa).

Residues 9 to 11 (LAG), Lys-21, Asp-69, and Asp-100 contribute to the GTP site. Asp-100 is a binding site for Mg(2+).

It belongs to the MobA family. Mg(2+) is required as a cofactor.

It is found in the cytoplasm. The enzyme catalyses Mo-molybdopterin + GTP + H(+) = Mo-molybdopterin guanine dinucleotide + diphosphate. Functionally, transfers a GMP moiety from GTP to Mo-molybdopterin (Mo-MPT) cofactor (Moco or molybdenum cofactor) to form Mo-molybdopterin guanine dinucleotide (Mo-MGD) cofactor. This is Probable molybdenum cofactor guanylyltransferase from Bacillus cereus (strain B4264).